We begin with the raw amino-acid sequence, 351 residues long: Dihydroorotate dehydrogenase (quinone) (351 aa).

FMN is bound by residues 67 to 71 (AGFDK) and T91. Position 71 (K71) interacts with substrate. 116-120 (NAMGF) provides a ligand contact to substrate. 2 residues coordinate FMN: N145 and N178. N178 provides a ligand contact to substrate. The active-site Nucleophile is the S181. N183 provides a ligand contact to substrate. K214 and T242 together coordinate FMN. Position 243–244 (243–244 (NT)) interacts with substrate. FMN is bound by residues G262, G291, and 312–313 (YS).

It belongs to the dihydroorotate dehydrogenase family. Type 2 subfamily. Monomer. FMN serves as cofactor.

Its subcellular location is the cell membrane. The enzyme catalyses (S)-dihydroorotate + a quinone = orotate + a quinol. It functions in the pathway pyrimidine metabolism; UMP biosynthesis via de novo pathway; orotate from (S)-dihydroorotate (quinone route): step 1/1. Functionally, catalyzes the conversion of dihydroorotate to orotate with quinone as electron acceptor. In Helicobacter acinonychis (strain Sheeba), this protein is Dihydroorotate dehydrogenase (quinone).